Here is a 213-residue protein sequence, read N- to C-terminus: Nucleoside triphosphate pyrophosphatase (213 aa).

The active-site Proton acceptor is the Asp-77.

Belongs to the Maf family. It depends on a divalent metal cation as a cofactor.

Its subcellular location is the cytoplasm. The catalysed reaction is a ribonucleoside 5'-triphosphate + H2O = a ribonucleoside 5'-phosphate + diphosphate + H(+). It catalyses the reaction a 2'-deoxyribonucleoside 5'-triphosphate + H2O = a 2'-deoxyribonucleoside 5'-phosphate + diphosphate + H(+). Nucleoside triphosphate pyrophosphatase. May have a dual role in cell division arrest and in preventing the incorporation of modified nucleotides into cellular nucleic acids. This is Nucleoside triphosphate pyrophosphatase from Cutibacterium acnes (strain DSM 16379 / KPA171202) (Propionibacterium acnes).